The following is a 465-amino-acid chain: MFRQEQPLAEGSFAPMGSLQPDAGNSSWNGTEAPGGGTRATPYSLQVTLTLVCLAGLLMLFTVFGNVLVIIAVFTSRALKAPQNLFLVSLASADILVATLVIPFSLANEVMGYWYFGKVWCEIYLALDVLFCTSSIVHLCAISLDRYWSITQAIEYNLKRTPRRIKAIIVTVWVISAVISFPPLISIEKKGAGGGQQPAEPSCKINDQKWYVISSSIGSFFAPCLIMILVYVRIYQIAKRRTRVPPSRRGPDACSAPPGGADRRPNGLGPERGAGPTGAEAEPLPTQLNGAPGEPAPAGPRDGDALDLEESSSSEHAERPPGPRRPDRGPRAKGKTRASQVKPGDSLPRRGPGAAGPGASGSGHGEERGGGAKASRWRGRQNREKRFTFVLAVVIGVFVVCWFPFFFTYTLIAVGCPVPSQLFNFFFWFGYCNSSLNPVIYTIFNHDFRRAFKKILCRGDRKRIV.

Topologically, residues 1–48 (MFRQEQPLAEGSFAPMGSLQPDAGNSSWNGTEAPGGGTRATPYSLQVT) are extracellular. N-linked (GlcNAc...) asparagine glycans are attached at residues Asn-25 and Asn-29. Residues 49–74 (LTLVCLAGLLMLFTVFGNVLVIIAVF) form a helical membrane-spanning segment. The Cytoplasmic segment spans residues 75–85 (TSRALKAPQNL). The helical transmembrane segment at 86–111 (FLVSLASADILVATLVIPFSLANEVM) threads the bilayer. The Extracellular segment spans residues 112-121 (GYWYFGKVWC). Cys-121 and Cys-203 form a disulfide bridge. A helical membrane pass occupies residues 122 to 144 (EIYLALDVLFCTSSIVHLCAISL). The Cytoplasmic portion of the chain corresponds to 145–164 (DRYWSITQAIEYNLKRTPRR). The chain crosses the membrane as a helical span at residues 165–188 (IKAIIVTVWVISAVISFPPLISIE). At 189–207 (KKGAGGGQQPAEPSCKIND) the chain is on the extracellular side. A helical transmembrane segment spans residues 208 to 232 (QKWYVISSSIGSFFAPCLIMILVYV). The Cytoplasmic portion of the chain corresponds to 233-389 (RIYQIAKRRT…RQNREKRFTF (157 aa)). The interval 242 to 378 (TRVPPSRRGP…GGGAKASRWR (137 aa)) is disordered. Basic and acidic residues predominate over residues 313-330 (SSEHAERPPGPRRPDRGP). Position 346 is a phosphoserine (Ser-346). Gly residues predominate over residues 353–363 (GAAGPGASGSG). At Arg-368 the chain carries Omega-N-methylarginine. A helical transmembrane segment spans residues 390–414 (VLAVVIGVFVVCWFPFFFTYTLIAV). The Extracellular portion of the chain corresponds to 415 to 424 (GCPVPSQLFN). The chain crosses the membrane as a helical span at residues 425-445 (FFFWFGYCNSSLNPVIYTIFN). The Cytoplasmic segment spans residues 446–465 (HDFRRAFKKILCRGDRKRIV). The S-palmitoyl cysteine moiety is linked to residue Cys-457.

The protein belongs to the G-protein coupled receptor 1 family. Adrenergic receptor subfamily. ADRA2A sub-subfamily.

It is found in the cell membrane. Functionally, alpha-2 adrenergic receptors mediate the catecholamine-induced inhibition of adenylate cyclase through the action of G proteins. This Mus musculus (Mouse) protein is Alpha-2A adrenergic receptor.